A 507-amino-acid chain; its full sequence is ATP synthase subunit alpha, chloroplastic (507 aa).

Residue 170-177 (GDRQTGKT) coordinates ATP.

It belongs to the ATPase alpha/beta chains family. In terms of assembly, F-type ATPases have 2 components, CF(1) - the catalytic core - and CF(0) - the membrane proton channel. CF(1) has five subunits: alpha(3), beta(3), gamma(1), delta(1), epsilon(1). CF(0) has four main subunits: a, b, b' and c.

Its subcellular location is the plastid. The protein localises to the chloroplast thylakoid membrane. The enzyme catalyses ATP + H2O + 4 H(+)(in) = ADP + phosphate + 5 H(+)(out). In terms of biological role, produces ATP from ADP in the presence of a proton gradient across the membrane. The alpha chain is a regulatory subunit. The chain is ATP synthase subunit alpha, chloroplastic from Sorghum bicolor (Sorghum).